A 340-amino-acid chain; its full sequence is Nuclear transcription factor Y subunit A-3 (340 aa).

The tract at residues 43-116 (SLSLKVDSRP…KGFASNPKQG (74 aa)) is disordered. A compositionally biased stretch (low complexity) spans 60-77 (QISFQDQDSSSTQSTGQS). The segment covering 78-103 (YTEVASSGDDNPSRQISFSAKSGSEI) has biased composition (polar residues). The short motif at 182 to 205 (FVNAKQYHAIMRRRQQRAKLEAQN) is the Subunit association domain (SAD) element. The NFYA/HAP2-type DNA-binding region spans 212-237 (KPYLHESRHVHALKRPRGSGGRFLNT).

The protein belongs to the NFYA/HAP2 subunit family. As to quaternary structure, heterotrimeric transcription factor composed of three components, NF-YA, NF-YB and NF-YC. NF-YB and NF-YC must interact and dimerize for NF-YA association and DNA binding. As to expression, ubiquitous.

Its subcellular location is the nucleus. Functionally, stimulates the transcription of various genes by recognizing and binding to a CCAAT motif in promoters. This chain is Nuclear transcription factor Y subunit A-3 (NFYA3), found in Arabidopsis thaliana (Mouse-ear cress).